A 71-amino-acid chain; its full sequence is Small ribosomal subunit protein bS21 (71 aa).

Belongs to the bacterial ribosomal protein bS21 family.

The sequence is that of Small ribosomal subunit protein bS21 from Wigglesworthia glossinidia brevipalpis.